The primary structure comprises 303 residues: MYQRCFDNASETLFVAGKTPRLSRFAFSDDPKWESGHHVHDNETELIYVKKGVARFTIDSSLYVAHADDIVVIERGRLHAVASDVNDPATTCTCALYGFQFQGAEENQLLQPHSCPVIAAGQGKEVIKTLFNELSVILPQSKNSQTSSLWDAFAYTLAILYYENFKNAYRSEQGYIKKDVLIKDILFYLNNNYREKITLEQLSKKFRASVSYICHEFTKEYRISPINYVIQRRMTEAKWSLTNTELSQAEISWRVGYENVDHFAKLFLRHVGCSPSDYRRQFKNCFAEQEILSEFPQPVSLVG.

In terms of domain architecture, HTH araC/xylS-type spans Lys183–Gln281. DNA-binding regions (H-T-H motif) lie at residues Glu200–Tyr221 and Gln248–Val271.

This is an uncharacterized protein from Escherichia coli (strain K12).